A 457-amino-acid chain; its full sequence is Argininosuccinate lyase (457 aa).

This sequence belongs to the lyase 1 family. Argininosuccinate lyase subfamily.

The protein localises to the cytoplasm. It carries out the reaction 2-(N(omega)-L-arginino)succinate = fumarate + L-arginine. It functions in the pathway amino-acid biosynthesis; L-arginine biosynthesis; L-arginine from L-ornithine and carbamoyl phosphate: step 3/3. This chain is Argininosuccinate lyase, found in Haemophilus influenzae (strain ATCC 51907 / DSM 11121 / KW20 / Rd).